Consider the following 81-residue polypeptide: Cytochrome b559 subunit alpha (81 aa).

The heme site is built by Arg-18 and His-23. A helical membrane pass occupies residues 19–40 (YWVIHSITIPMLFIAGWLFVST).

It belongs to the PsbE/PsbF family. As to quaternary structure, heterodimer of an alpha subunit and a beta subunit. PSII is composed of 1 copy each of membrane proteins PsbA, PsbB, PsbC, PsbD, PsbE, PsbF, PsbH, PsbI, PsbJ, PsbK, PsbL, PsbM, PsbT, PsbX, PsbY, PsbZ, Psb30/Ycf12, peripheral proteins PsbO, CyanoQ (PsbQ), PsbU, PsbV and a large number of cofactors. It forms dimeric complexes. Heme b is required as a cofactor.

The protein resides in the cellular thylakoid membrane. Functionally, this b-type cytochrome is tightly associated with the reaction center of photosystem II (PSII). PSII is a light-driven water:plastoquinone oxidoreductase that uses light energy to abstract electrons from H(2)O, generating O(2) and a proton gradient subsequently used for ATP formation. It consists of a core antenna complex that captures photons, and an electron transfer chain that converts photonic excitation into a charge separation. The protein is Cytochrome b559 subunit alpha of Synechocystis sp. (strain ATCC 27184 / PCC 6803 / Kazusa).